Reading from the N-terminus, the 173-residue chain is Photosystem I assembly protein Ycf3 (173 aa).

3 TPR repeats span residues 35–68 (AFVY…EDDA), 72–105 (SYIL…NPNL), and 120–153 (GERA…APNN).

This sequence belongs to the Ycf3 family.

It is found in the cellular thylakoid membrane. In terms of biological role, essential for the assembly of the photosystem I (PSI) complex. May act as a chaperone-like factor to guide the assembly of the PSI subunits. In Gloeothece citriformis (strain PCC 7424) (Cyanothece sp. (strain PCC 7424)), this protein is Photosystem I assembly protein Ycf3.